Here is a 115-residue protein sequence, read N- to C-terminus: Large ribosomal subunit protein bL19 (115 aa).

The protein belongs to the bacterial ribosomal protein bL19 family.

Functionally, this protein is located at the 30S-50S ribosomal subunit interface and may play a role in the structure and function of the aminoacyl-tRNA binding site. The chain is Large ribosomal subunit protein bL19 from Baumannia cicadellinicola subsp. Homalodisca coagulata.